The chain runs to 180 residues: Chromosome-anchoring protein RacA (180 aa).

The H-T-H motif DNA-binding region spans 5–25 (TPFIAKKLGVSPKAVVRIAQQ). A coiled-coil region spans residues 89–151 (SHDFEQLTAQ…LEATLKKEEP (63 aa)).

It belongs to the RacA family.

It localises to the cytoplasm. Its function is as follows. Required for the formation of axial filaments and for anchoring the origin regions at the cell poles in sporulating cells, thus ensuring proper chromosome segregation in the prespore. Binds in a dispersed manner throughout the chromosome but preferentially to sites clustered in the origin portion of the chromosome, causing condensation of the chromosome and its remodeling into an elongated, anchored structure. This Bacillus cereus (strain ATCC 10987 / NRS 248) protein is Chromosome-anchoring protein RacA.